The following is a 246-amino-acid chain: PF03932 family protein CutC (246 aa).

The protein belongs to the CutC family.

Its subcellular location is the cytoplasm. The protein is PF03932 family protein CutC of Treponema denticola (strain ATCC 35405 / DSM 14222 / CIP 103919 / JCM 8153 / KCTC 15104).